The primary structure comprises 144 residues: MSAKKSTKDSKEQNTPLGGLVLAETPITFNENKPVTKVKVRNTGDRPIQVGSHFHFFEVNRALEFDRAAAYGKRLNISSTTAIRFEPGDETEVPLIPFGGKQTLYGFNNLVDGWTGEGVVPNSERPDKLAAIRLAAERGFKSSK.

Belongs to the urease beta subunit family. In terms of assembly, heterotrimer of UreA (gamma), UreB (beta) and UreC (alpha) subunits. Three heterotrimers associate to form the active enzyme.

It is found in the cytoplasm. The catalysed reaction is urea + 2 H2O + H(+) = hydrogencarbonate + 2 NH4(+). The protein operates within nitrogen metabolism; urea degradation; CO(2) and NH(3) from urea (urease route): step 1/1. The polypeptide is Urease subunit beta (Yersinia pseudotuberculosis serotype O:1b (strain IP 31758)).